A 744-amino-acid chain; its full sequence is Catalase A (744 aa).

Active-site residues include H93 and N166. Heme is bound at residue Y380.

It belongs to the catalase family. Heme is required as a cofactor.

It is found in the peroxisome matrix. The enzyme catalyses 2 H2O2 = O2 + 2 H2O. Catalyzes the degradation of hydrogen peroxide (H(2)O(2)) generated by peroxisomal oxidases to water and oxygen, thereby protecting cells from the toxic effects of hydrogen peroxide. The sequence is that of Catalase A (catA) from Emericella nidulans (strain FGSC A4 / ATCC 38163 / CBS 112.46 / NRRL 194 / M139) (Aspergillus nidulans).